The following is a 310-amino-acid chain: tRNA dimethylallyltransferase (310 aa).

13–20 lines the ATP pocket; the sequence is GPTASGKT. Position 15–20 (15–20) interacts with substrate; sequence TASGKT. Interaction with substrate tRNA regions lie at residues 38-41, 162-166, 243-248, and 276-283; these read DSAL, QRLSR, RCVGYR, and KRQITWLR.

This sequence belongs to the IPP transferase family. As to quaternary structure, monomer. The cofactor is Mg(2+).

The enzyme catalyses adenosine(37) in tRNA + dimethylallyl diphosphate = N(6)-dimethylallyladenosine(37) in tRNA + diphosphate. In terms of biological role, catalyzes the transfer of a dimethylallyl group onto the adenine at position 37 in tRNAs that read codons beginning with uridine, leading to the formation of N6-(dimethylallyl)adenosine (i(6)A). This Vibrio campbellii (strain ATCC BAA-1116) protein is tRNA dimethylallyltransferase.